A 212-amino-acid chain; its full sequence is Small ribosomal subunit protein uS5 (212 aa).

In terms of domain architecture, S5 DRBM spans 48–111 (LDDEVLDINM…EVAKLNIIDV (64 aa)).

Belongs to the universal ribosomal protein uS5 family. As to quaternary structure, part of the 30S ribosomal subunit. Contacts protein S4.

Functionally, with S4 and S12 plays an important role in translational accuracy. The protein is Small ribosomal subunit protein uS5 of Halobacterium salinarum (strain ATCC 700922 / JCM 11081 / NRC-1) (Halobacterium halobium).